Consider the following 106-residue polypeptide: Iron-sulfur cluster assembly protein CyaY (106 aa).

The protein belongs to the frataxin family.

Its function is as follows. Involved in iron-sulfur (Fe-S) cluster assembly. May act as a regulator of Fe-S biogenesis. This chain is Iron-sulfur cluster assembly protein CyaY, found in Yersinia pestis bv. Antiqua (strain Antiqua).